A 478-amino-acid polypeptide reads, in one-letter code: UDP-N-acetylmuramate--L-alanine ligase (478 aa).

126–132 lines the ATP pocket; sequence GTHGKTT.

Belongs to the MurCDEF family.

It localises to the cytoplasm. It carries out the reaction UDP-N-acetyl-alpha-D-muramate + L-alanine + ATP = UDP-N-acetyl-alpha-D-muramoyl-L-alanine + ADP + phosphate + H(+). It participates in cell wall biogenesis; peptidoglycan biosynthesis. In terms of biological role, cell wall formation. The sequence is that of UDP-N-acetylmuramate--L-alanine ligase from Synechococcus sp. (strain JA-2-3B'a(2-13)) (Cyanobacteria bacterium Yellowstone B-Prime).